A 394-amino-acid chain; its full sequence is Actin-related protein 2-A (394 aa).

Residues 160–162 (GDG), 214–218 (RMIKE), and 305–310 (GGSTMY) each bind ATP.

Belongs to the actin family. ARP2 subfamily. In terms of assembly, component of the Arp2/3 complex composed of actr2/arp2, actr3/arp3, arpc1 (arpc1a or arpc1b), arpc2, arpc3, arpc4 and arpc5.

The protein resides in the cytoplasm. It localises to the cytoskeleton. The protein localises to the cell projection. It is found in the nucleus. In terms of biological role, ATP-binding component of the Arp2/3 complex, a multiprotein complex that mediates actin polymerization upon stimulation by nucleation-promoting factor (NPF). The Arp2/3 complex mediates the formation of branched actin networks in the cytoplasm, providing the force for cell motility. Seems to contact the pointed end of the daughter actin filament. In addition to its role in the cytoplasmic cytoskeleton, the Arp2/3 complex also promotes actin polymerization in the nucleus, thereby regulating gene transcription and repair of damaged DNA. The Arp2/3 complex promotes homologous recombination (HR) repair in response to DNA damage by promoting nuclear actin polymerization, leading to drive motility of double-strand breaks (DSBs). The chain is Actin-related protein 2-A (actr2-a) from Xenopus laevis (African clawed frog).